Consider the following 345-residue polypeptide: Myb/SANT-like DNA-binding domain-containing protein 4 (345 aa).

One can recognise a Myb-like domain in the interval 4–77 (LKRKRKSNFS…EVKRRYLDWR (74 aa)). K9 is covalently cross-linked (Glycyl lysine isopeptide (Lys-Gly) (interchain with G-Cter in SUMO2)). Residue S106 is modified to Phosphoserine. Glycyl lysine isopeptide (Lys-Gly) (interchain with G-Cter in SUMO2) cross-links involve residues K114 and K142. The interval 143-175 (VEEEERDPQSPEFEIEEEEEMLSSVIPDSRREN) is disordered. T188 is subject to Phosphothreonine. Positions 203-345 (LLVNIEKQKL…LRIQKEGHLQ (143 aa)) form a coiled coil. Glycyl lysine isopeptide (Lys-Gly) (interchain with G-Cter in SUMO2) cross-links involve residues K237, K254, and K273.

The protein is Myb/SANT-like DNA-binding domain-containing protein 4 (MSANTD4) of Homo sapiens (Human).